A 348-amino-acid chain; its full sequence is Chaperone protein DnaJ (348 aa).

Residues 3–65 (DLYGILGVDH…EQRQRYDRHV (63 aa)) enclose the J domain. A CR-type zinc finger spans residues 109-191 (GGSQVVKIDS…CYGNGSRSAP (83 aa)). Zn(2+)-binding residues include Cys122, Cys125, Cys139, Cys142, Cys165, Cys168, Cys179, and Cys182. 4 CXXCXGXG motif repeats span residues 122–129 (CDVCNGTR), 139–146 (CFDCNGSG), 165–172 (CSKCRGNG), and 179–186 (CRRCYGNG).

Belongs to the DnaJ family. Homodimer. It depends on Zn(2+) as a cofactor.

The protein resides in the cytoplasm. Functionally, participates actively in the response to hyperosmotic and heat shock by preventing the aggregation of stress-denatured proteins and by disaggregating proteins, also in an autonomous, DnaK-independent fashion. Unfolded proteins bind initially to DnaJ; upon interaction with the DnaJ-bound protein, DnaK hydrolyzes its bound ATP, resulting in the formation of a stable complex. GrpE releases ADP from DnaK; ATP binding to DnaK triggers the release of the substrate protein, thus completing the reaction cycle. Several rounds of ATP-dependent interactions between DnaJ, DnaK and GrpE are required for fully efficient folding. Also involved, together with DnaK and GrpE, in the DNA replication of plasmids through activation of initiation proteins. The polypeptide is Chaperone protein DnaJ (Tropheryma whipplei (strain TW08/27) (Whipple's bacillus)).